The sequence spans 179 residues: Large ribosomal subunit protein uL5 (179 aa).

Belongs to the universal ribosomal protein uL5 family. Part of the 50S ribosomal subunit; part of the 5S rRNA/L5/L18/L25 subcomplex. Contacts the 5S rRNA and the P site tRNA. Forms a bridge to the 30S subunit in the 70S ribosome.

This is one of the proteins that bind and probably mediate the attachment of the 5S RNA into the large ribosomal subunit, where it forms part of the central protuberance. In the 70S ribosome it contacts protein S13 of the 30S subunit (bridge B1b), connecting the 2 subunits; this bridge is implicated in subunit movement. Contacts the P site tRNA; the 5S rRNA and some of its associated proteins might help stabilize positioning of ribosome-bound tRNAs. The sequence is that of Large ribosomal subunit protein uL5 from Alkaliphilus metalliredigens (strain QYMF).